Reading from the N-terminus, the 282-residue chain is F-actin-capping protein subunit alpha (282 aa).

This sequence belongs to the F-actin-capping protein alpha subunit family. As to quaternary structure, component of the F-actin capping complex, composed of a heterodimer of an alpha and a beta subunit.

It localises to the cytoplasm. The protein localises to the cytoskeleton. F-actin-capping proteins bind in a Ca(2+)-independent manner to the fast growing ends of actin filaments (barbed end) thereby blocking the exchange of subunits at these ends. Unlike other capping proteins (such as gelsolin and severin), these proteins do not sever actin filaments. The protein is F-actin-capping protein subunit alpha (cap-1) of Caenorhabditis elegans.